Here is a 315-residue protein sequence, read N- to C-terminus: Protein SHORT INTERNODES 1 (315 aa).

The segment covering 1-10 (MAGFPLGGGS) has biased composition (gly residues). Disordered stretches follow at residues 1 to 24 (MAGF…PPVH) and 64 to 92 (PPAP…GGGG). The segment covering 70–82 (AGASSSSSSRGMR) has biased composition (low complexity). Residues 83 to 92 (SSGGGGGGGG) show a composition bias toward gly residues. Positions 97, 100, 108, 113, 117, and 124 each coordinate Zn(2+). A DNA-binding region (zn(2)-C6 fungal-type; degenerate) is located at residues 97–124 (CQDCGNQAKKDCTHMRCRTCCKSRGFAC). Low complexity-rich tracts occupy residues 143-156 (QQLA…AATA) and 172-182 (RPSATTPTTSS). The tract at residues 143 to 186 (QQLAALAASAAATAGGAGPSRDPTKRPRARPSATTPTTSSGDQQ) is disordered. Residues 227 to 230 (IGGH) carry the Required for homo- and heterodimerization motif.

This sequence belongs to the SHI protein family. Forms homodimers (via C-terminus). Interacts with SPL14/IPA1 (via C-terminus). As to expression, predominantly expressed in axillary buds and young panicles.

It localises to the nucleus. In terms of biological role, regulates tillering and panicle branching by modulating SPL14/IPA1 transcriptional activity on the downstream TB1 and DEP1 target genes. Binds directly to the 5'-T/GCTCTAC-3' DNA motif found in the promoter regions of both TB1 and DEP1. Represses the DNA binding activity of SPL14/IPA1 toward the promoters of both TB1 and DEP1. Exhibits weak transcriptional activation activity in yeast cells. This is Protein SHORT INTERNODES 1 from Oryza sativa subsp. japonica (Rice).